We begin with the raw amino-acid sequence, 152 residues long: Kininogen-1c (152 aa).

The N-terminal stretch at 1 to 23 (MRLWFCLSLFIVLCLEHFPGTLA) is a signal peptide. Positions 28–44 (VPESEEKTEQFLRDLPK) are enriched in basic and acidic residues. The interval 28 to 152 (VPESEEKTEQ…RGKFHSQSHV (125 aa)) is disordered.

This sequence belongs to the bradykinin-related peptide family. In terms of tissue distribution, expressed by the skin glands.

The protein localises to the secreted. Functionally, potent vasodilator. Binds B1 (BDKRB1) and B2 (BDKRB2) bradykinin receptors. This chain is Kininogen-1c, found in Bombina maxima (Giant fire-bellied toad).